The following is a 72-amino-acid chain: Guanine nucleotide-binding protein G(I)/G(S)/G(O) subunit gamma-12 (72 aa).

Position 2 is an N-acetylserine (Ser2). Residues Ser10 and Ser26 each carry the phosphoserine modification. Tyr42 is subject to Phosphotyrosine. At Ser49 the chain carries Phosphoserine. Cys69 is subject to Cysteine methyl ester. The S-geranylgeranyl cysteine moiety is linked to residue Cys69. Residues 70 to 72 (IIL) constitute a propeptide, removed in mature form.

This sequence belongs to the G protein gamma family. As to quaternary structure, g proteins are composed of 3 units, alpha, beta and gamma.

It localises to the cell membrane. Guanine nucleotide-binding proteins (G proteins) are involved as a modulator or transducer in various transmembrane signaling systems. The beta and gamma chains are required for the GTPase activity, for replacement of GDP by GTP, and for G protein-effector interaction. This Mus musculus (Mouse) protein is Guanine nucleotide-binding protein G(I)/G(S)/G(O) subunit gamma-12 (Gng12).